A 626-amino-acid chain; its full sequence is MVVQHNQPGSTDQSVIRNFCIIAHIDHGKSTVADRILQLSGIVPEREMRDRFLDRMDIEQERGITIKSQAVRVPWTFDGTEYTLGMIDTPGHVDFTYEVSRALAACEGAVLLVDATQGIEAQTLSNLYMAIDHDLAIIPVLNKIDLPSAEPDKHAEEIAGLIGCEPSDVLRVSGKTGEGVADLLDQIVMDVPAPHGDPDAPARALIFDSVYDSYRGIVTYIRMEDGELHDREKVHMMGIGMTHDPIEIGVISPDMTRTKALGAGEVGYIITGAKDVSQSKVGDTLTSAVRPAAEPLPGYRDPKPMVYAGLFPIDNAQFPELRDALDKLKLNDAALIYTPETSVALGFGFRCGFLGLLHMEIVNERLSREFGLDLIQTAPNVTYDVTAEDGSQHHVTNPSEFPDGKIKKIVEPMVAADIITPKEFIGAVMDLCQDHRGIMGTMEYISTDRVEMHYRIPLAEIVFDFFDQLKSRTKGYASLDYHEDGEQSADLVKVDILIQGEKVDAFSAIVHRDKAYSYGVMMTKKLRSLIPRQQFEIPIQAAIGSRIIARENIRALRKDVLAKCYGGDITRKRKLLEKQKAGKKRMKMLGHVEVPQEAFIAALSTGEDSNDRDTKDKIRAAQKTEG.

The 182-residue stretch at 14-195 folds into the tr-type G domain; the sequence is SVIRNFCIIA…QIVMDVPAPH (182 aa). Residues 26–31 and 142–145 contribute to the GTP site; these read DHGKST and NKID. Residues 603 to 626 form a disordered region; that stretch reads LSTGEDSNDRDTKDKIRAAQKTEG. Residues 609–626 show a composition bias toward basic and acidic residues; it reads SNDRDTKDKIRAAQKTEG.

Belongs to the TRAFAC class translation factor GTPase superfamily. Classic translation factor GTPase family. LepA subfamily.

It is found in the cell membrane. It catalyses the reaction GTP + H2O = GDP + phosphate + H(+). Functionally, required for accurate and efficient protein synthesis under certain stress conditions. May act as a fidelity factor of the translation reaction, by catalyzing a one-codon backward translocation of tRNAs on improperly translocated ribosomes. Back-translocation proceeds from a post-translocation (POST) complex to a pre-translocation (PRE) complex, thus giving elongation factor G a second chance to translocate the tRNAs correctly. Binds to ribosomes in a GTP-dependent manner. In Bifidobacterium longum (strain DJO10A), this protein is Elongation factor 4.